A 29-amino-acid polypeptide reads, in one-letter code: Probable small toxic protein BsrH (29 aa).

A helical membrane pass occupies residues 6-26; that stretch reads FQALMLMLAFGSFIIALLTYI.

Its subcellular location is the cell membrane. Its function is as follows. Possible toxic component of a type I toxin-antitoxin (TA) system; an overlapping antisense RNA has been identified. In Bacillus subtilis (strain 168), this protein is Probable small toxic protein BsrH.